Here is a 419-residue protein sequence, read N- to C-terminus: Serine hydroxymethyltransferase (419 aa).

(6S)-5,6,7,8-tetrahydrofolate contacts are provided by residues L121 and 125–127; that span reads GHL. K229 bears the N6-(pyridoxal phosphate)lysine mark. 354 to 356 provides a ligand contact to (6S)-5,6,7,8-tetrahydrofolate; the sequence is SPF.

Belongs to the SHMT family. In terms of assembly, homodimer. Pyridoxal 5'-phosphate is required as a cofactor.

The protein resides in the cytoplasm. It catalyses the reaction (6R)-5,10-methylene-5,6,7,8-tetrahydrofolate + glycine + H2O = (6S)-5,6,7,8-tetrahydrofolate + L-serine. It functions in the pathway one-carbon metabolism; tetrahydrofolate interconversion. The protein operates within amino-acid biosynthesis; glycine biosynthesis; glycine from L-serine: step 1/1. Functionally, catalyzes the reversible interconversion of serine and glycine with tetrahydrofolate (THF) serving as the one-carbon carrier. This reaction serves as the major source of one-carbon groups required for the biosynthesis of purines, thymidylate, methionine, and other important biomolecules. Also exhibits THF-independent aldolase activity toward beta-hydroxyamino acids, producing glycine and aldehydes, via a retro-aldol mechanism. The protein is Serine hydroxymethyltransferase of Coxiella burnetii (strain CbuG_Q212) (Coxiella burnetii (strain Q212)).